A 170-amino-acid polypeptide reads, in one-letter code: Lipoprotein signal peptidase (170 aa).

3 helical membrane-spanning segments follow: residues 9-29 (FNIF…KYLV), 72-92 (IFFI…ALKE), and 95-117 (CITR…DRLF). Catalysis depends on residues aspartate 124 and aspartate 146. The helical transmembrane segment at 143 to 163 (NFADSYVVIGMILFLVYDFFI) threads the bilayer.

Belongs to the peptidase A8 family.

It is found in the cell inner membrane. It catalyses the reaction Release of signal peptides from bacterial membrane prolipoproteins. Hydrolyzes -Xaa-Yaa-Zaa-|-(S,diacylglyceryl)Cys-, in which Xaa is hydrophobic (preferably Leu), and Yaa (Ala or Ser) and Zaa (Gly or Ala) have small, neutral side chains.. It participates in protein modification; lipoprotein biosynthesis (signal peptide cleavage). Its function is as follows. This protein specifically catalyzes the removal of signal peptides from prolipoproteins. This chain is Lipoprotein signal peptidase, found in Borrelia garinii subsp. bavariensis (strain ATCC BAA-2496 / DSM 23469 / PBi) (Borreliella bavariensis).